A 327-amino-acid polypeptide reads, in one-letter code: Aquaporin-1 (327 aa).

The interval 1–34 (MSSNDSNDTDKQHTRLDPTGVDDAYIPPEQPETK) is disordered. Residues 1 to 48 (MSSNDSNDTDKQHTRLDPTGVDDAYIPPEQPETKHHRFKISKDTLRNH) lie on the Cytoplasmic side of the membrane. The helical transmembrane segment at 49–69 (FIAAAGEFCGTFMFLWCAYVI) threads the bilayer. The Extracellular segment spans residues 70–91 (CNVANHDVALVAAPDGSHPGQL). Residues 92–112 (IMIAIGFGFSVMFSIWCFAGV) traverse the membrane as a helical segment. Residues 113–136 (SGGALNPAVSLSLCLARAVSPTRC) lie on the Cytoplasmic side of the membrane. The NPA 1 signature appears at 118–120 (NPA). Residues 137 to 157 (VVMWVSQIVAGMAAGGAASAM) traverse the membrane as a helical segment. Over 158–176 (TPGEVLFANSLGLGCSRTR) the chain is Extracellular. A helical membrane pass occupies residues 177-197 (GLFLEMFGTAILCLTVLMTAV). Topologically, residues 198-203 (EKRETN) are cytoplasmic. A helical membrane pass occupies residues 204 to 224 (FMAALPIGISLFIAHVALTAY). The Extracellular segment spans residues 225 to 248 (TGTGVNPARSLGAAVAARYFPHYH). An NPA 2 motif is present at residues 230-232 (NPA). A helical membrane pass occupies residues 249–269 (WIYWIGPLLGSILAWSVWQLL). The Cytoplasmic segment spans residues 270–327 (QILDYTTYVTAEKAASTKEKAQKKVKPAVPLLWLKSNFSLLFFISRSLALNVIIFGKN).

Belongs to the MIP/aquaporin (TC 1.A.8) family.

It is found in the endoplasmic reticulum membrane. The protein localises to the cell membrane. Functionally, water channel required to facilitate the transport of water across membranes. Involved in sporulation, freeze tolerance and osmotolerance. Is non-functional in most laboratory strains. The sequence is that of Aquaporin-1 (AQY1) from Saccharomyces cerevisiae (strain Lalvin EC1118 / Prise de mousse) (Baker's yeast).